A 903-amino-acid chain; its full sequence is Dual 3',5'-cyclic-AMP and -GMP phosphodiesterase 11A (903 aa).

GAF domains follow at residues 175–324 and 356–512; these read DLTS…GIAI and DLEK…GLGI. S378 is a 3',5'-cyclic GMP binding site. A PDEase domain is found at 542-866; that stretch reads SKTEVDKFKA…VKWEELDKKR (325 aa). H618 serves as the catalytic Proton donor. H622, H658, D659, and D770 together coordinate a divalent metal cation. Positions 863-903 are disordered; it reads DKKRQHDHGASVPASPCSAAEGSETGGVPCCSNNTPPTHVS. Positions 893 to 903 are enriched in polar residues; sequence CSNNTPPTHVS.

It belongs to the cyclic nucleotide phosphodiesterase family. Requires a divalent metal cation as cofactor.

It localises to the cytoplasm. The protein localises to the cytosol. It catalyses the reaction 3',5'-cyclic GMP + H2O = GMP + H(+). The catalysed reaction is 3',5'-cyclic AMP + H2O = AMP + H(+). In terms of biological role, plays a role in signal transduction by regulating the intracellular concentration of cyclic nucleotides cAMP and cGMP. Catalyzes the hydrolysis of both cAMP and cGMP to 5'-AMP and 5'-GMP, respectively. This Takifugu rubripes (Japanese pufferfish) protein is Dual 3',5'-cyclic-AMP and -GMP phosphodiesterase 11A (pde11a).